A 258-amino-acid polypeptide reads, in one-letter code: HTH-type transcriptional repressor GlcR (258 aa).

An HTH deoR-type domain is found at 3–58 (QEERLVAILDFLKQHNRITTEQICTLLQVSRDTARRDLVKLEEQNAIIRTRGGAIL). Positions 20–39 (ITTEQICTLLQVSRDTARRD) form a DNA-binding region, H-T-H motif.

Plays a role in carbon catabolite repression (CCR). Specifically required for transcriptional repression of the levanase operon by glucose but not by other sugars. The protein is HTH-type transcriptional repressor GlcR (glcR) of Bacillus subtilis (strain 168).